We begin with the raw amino-acid sequence, 162 residues long: Ribonuclease P protein component (162 aa).

Positions 1–62 are disordered; the sequence is MDEKDLATQP…GPPKAGGRLL (62 aa). A compositionally biased stretch (basic and acidic residues) spans 21–36; it reads GPHEDPRRQERAEAQA.

This sequence belongs to the RnpA family. In terms of assembly, consists of a catalytic RNA component (M1 or rnpB) and a protein subunit.

It catalyses the reaction Endonucleolytic cleavage of RNA, removing 5'-extranucleotides from tRNA precursor.. In terms of biological role, RNaseP catalyzes the removal of the 5'-leader sequence from pre-tRNA to produce the mature 5'-terminus. It can also cleave other RNA substrates such as 4.5S RNA. The protein component plays an auxiliary but essential role in vivo by binding to the 5'-leader sequence and broadening the substrate specificity of the ribozyme. This Thermus aquaticus protein is Ribonuclease P protein component.